The following is a 341-amino-acid chain: Heterogeneous nuclear ribonucleoproteins A2/B1 (341 aa).

RRM domains follow at residues 9-92 (RKLF…ESGK) and 100-179 (KKLF…LSRQ). Lysine 10 is covalently cross-linked (Glycyl lysine isopeptide (Lys-Gly) (interchain with G-Cter in SUMO2)). Residue serine 17 is modified to Phosphoserine. Omega-N-methylarginine is present on arginine 26. At serine 73 the chain carries Phosphoserine. Residue lysine 92 is modified to N6,N6-dimethyllysine; alternate. A Glycyl lysine isopeptide (Lys-Gly) (interchain with G-Cter in SUMO2); alternate cross-link involves residue lysine 92. Glycyl lysine isopeptide (Lys-Gly) (interchain with G-Cter in SUMO2) cross-links involve residues lysine 100, lysine 108, and lysine 125. Threonine 128 bears the Phosphothreonine mark. Residue serine 137 is modified to Phosphoserine. Lysine 140 participates in a covalent cross-link: Glycyl lysine isopeptide (Lys-Gly) (interchain with G-Cter in SUMO2). Threonine 147 bears the Phosphothreonine mark. Glycyl lysine isopeptide (Lys-Gly) (interchain with G-Cter in SUMO2); alternate cross-links involve residues lysine 156 and lysine 161. An N6-acetyllysine; alternate mark is found at lysine 156 and lysine 161. The residue at position 164 (threonine 164) is a Phosphothreonine. A Glycyl lysine isopeptide (Lys-Gly) (interchain with G-Cter in SUMO2) cross-link involves residue lysine 174. Phosphoserine is present on residues serine 177 and serine 189. A disordered region spans residues 181-341 (MQEVQSSRSG…SGGYGGRSRY (161 aa)). A compositionally biased stretch (gly residues) spans 190–211 (GRGGNFGFGDSRGGGGNFGPGP). Arginine 191 bears the Asymmetric dimethylarginine; alternate mark. At arginine 191 the chain carries Dimethylated arginine; alternate. At arginine 191 the chain carries Omega-N-methylarginine; alternate. A Phosphoserine modification is found at serine 200. An Asymmetric dimethylarginine; alternate modification is found at arginine 201. Dimethylated arginine; alternate is present on arginine 201. At arginine 201 the chain carries Omega-N-methylarginine; alternate. Serine 213 is modified (phosphoserine). At arginine 216 the chain carries Omega-N-methylarginine. Phosphoserine occurs at positions 219 and 224. Arginine 226 carries the post-translational modification Omega-N-methylarginine. At serine 247 the chain carries Phosphoserine. The residue at position 254 (arginine 254) is an Asymmetric dimethylarginine; alternate. The residue at position 254 (arginine 254) is an Omega-N-methylarginine; alternate. Positions 296-335 (QQPSNYGPMKSGNFGGSRNMGGPYGGGNYGPGGSGGSGGY) are nuclear targeting sequence. A compositionally biased stretch (gly residues) spans 308 to 341 (NFGGSRNMGGPYGGGNYGPGGSGGSGGYGGRSRY). Position 312 is a phosphoserine (serine 312). Arginine 313 carries the post-translational modification Omega-N-methylarginine. Tyrosine 319 carries the post-translational modification Phosphotyrosine. Residues serine 329 and serine 332 each carry the phosphoserine modification. Residue tyrosine 335 is modified to Phosphotyrosine. The residue at position 338 (arginine 338) is an Omega-N-methylarginine.

As to quaternary structure, identified in the spliceosome C complex. Identified in a IGF2BP1-dependent mRNP granule complex containing untranslated mRNAs. Interacts with IGF2BP1. Interacts with C9orf72. Interacts with DGCR8. Interacts with TARDBP. Interacts with CKAP5. Interacts with PPIA/CYPA. Interacts (via C-terminus) with FAM76B; the interaction results in retention of HNRNPA2B1 in the nucleus and inhibition of the NF-kappa-B-mediated inflammatory pathway. Interacts with NF-kappa-B inhibitors NFKBIA and NFKBIE; the interaction may be mediated by the RRM2 domain of HNRNPA2B1, and HNRNPA2B1 may interact simultaneously with FAM76B and either NFKBIA or NFKBIE to form a complex. In terms of processing, sumoylated in exosomes, promoting miRNAs-binding. Post-translationally, asymmetric dimethylation at Arg-254 constitutes the major methylation site. According to a report, methylation affects subcellular location and promotes nuclear localization. According to another report, methylation at Arg-254 does not influence nucleocytoplasmic shuttling.

It is found in the nucleus. The protein resides in the nucleoplasm. The protein localises to the cytoplasmic granule. It localises to the secreted. Its subcellular location is the extracellular exosome. Functionally, heterogeneous nuclear ribonucleoprotein (hnRNP) that associates with nascent pre-mRNAs, packaging them into hnRNP particles. The hnRNP particle arrangement on nascent hnRNA is non-random and sequence-dependent and serves to condense and stabilize the transcripts and minimize tangling and knotting. Packaging plays a role in various processes such as transcription, pre-mRNA processing, RNA nuclear export, subcellular location, mRNA translation and stability of mature mRNAs. Forms hnRNP particles with at least 20 other different hnRNP and heterogeneous nuclear RNA in the nucleus. Involved in transport of specific mRNAs to the cytoplasm in oligodendrocytes and neurons: acts by specifically recognizing and binding the A2RE (21 nucleotide hnRNP A2 response element) or the A2RE11 (derivative 11 nucleotide oligonucleotide) sequence motifs present on some mRNAs, and promotes their transport to the cytoplasm. Specifically binds single-stranded telomeric DNA sequences, protecting telomeric DNA repeat against endonuclease digestion. Also binds other RNA molecules, such as primary miRNA (pri-miRNAs): acts as a nuclear 'reader' of the N6-methyladenosine (m6A) mark by specifically recognizing and binding a subset of nuclear m6A-containing pri-miRNAs. Binding to m6A-containing pri-miRNAs promotes pri-miRNA processing by enhancing binding of DGCR8 to pri-miRNA transcripts. Involved in miRNA sorting into exosomes following sumoylation, possibly by binding (m6A)-containing pre-miRNAs. Acts as a regulator of efficiency of mRNA splicing, possibly by binding to m6A-containing pre-mRNAs. Plays a role in the splicing of pyruvate kinase PKM by binding repressively to sequences flanking PKM exon 9, inhibiting exon 9 inclusion and resulting in exon 10 inclusion and production of the PKM M2 isoform. The protein is Heterogeneous nuclear ribonucleoproteins A2/B1 (HNRNPA2B1) of Bos taurus (Bovine).